A 674-amino-acid polypeptide reads, in one-letter code: Primary amine oxidase (674 aa).

The first 25 residues, 1–25, serve as a signal peptide directing secretion; that stretch reads MASTTTMRLALFSVLTLLSFHAVVS. N-linked (GlcNAc...) asparagine glycosylation occurs at N156. A disulfide bond links C162 and C183. Positions 226–236 are enriched in polar residues; it reads ENTEYQVSKQS. The segment at 226–251 is disordered; the sequence is ENTEYQVSKQSPPFGPKQHSLTSHQP. A substrate-binding site is contributed by 323–334; the sequence is FFDSGEFGFGLS. Residue D325 is the Proton acceptor of the active site. C344 and C370 are joined by a disulfide. N-linked (GlcNAc...) asparagine glycosylation is present at N389. Residue 409–414 participates in substrate binding; that stretch reads VGNYDN. The Schiff-base intermediate with substrate; via topaquinone role is filled by Y412. A 2',4',5'-topaquinone modification is found at Y412. H467 and H469 together coordinate Cu cation. Residues D476, F477, D478, D617, and I618 each coordinate Mn(2+). H628 provides a ligand contact to Cu cation.

This sequence belongs to the copper/topaquinone oxidase family. In terms of assembly, homodimer. It depends on Cu cation as a cofactor. Mn(2+) is required as a cofactor. Requires L-topaquinone as cofactor. In terms of processing, topaquinone (TPQ) is generated by copper-dependent autoxidation of a specific tyrosyl residue.

It catalyses the reaction a primary methyl amine + O2 + H2O = an aldehyde + H2O2 + NH4(+). The chain is Primary amine oxidase from Pisum sativum (Garden pea).